Reading from the N-terminus, the 320-residue chain is Prophage side tail fiber protein homolog StfQ (320 aa).

Disordered stretches follow at residues 147 to 213 and 241 to 270; these read SGRA…HKSS and TTSGSGQTRNAGKTSSDGAHTHSLSGTAAS. 2 stretches are compositionally biased toward polar residues: residues 172–206 and 241–258; these read DLGTETTSSFDYGTKSTNNTGAHTHSISGTANSAG and TTSGSGQTRNAGKTSSDG. Residues 261 to 270 are compositionally biased toward low complexity; that stretch reads THSLSGTAAS.

It belongs to the tail fiber family.

In Escherichia coli (strain K12), this protein is Prophage side tail fiber protein homolog StfQ (stfQ).